The primary structure comprises 445 residues: UDP-N-acetylmuramoylalanine--D-glutamate ligase (445 aa).

An ATP-binding site is contributed by 117-123 (GSNGKTT).

The protein belongs to the MurCDEF family.

It is found in the cytoplasm. It carries out the reaction UDP-N-acetyl-alpha-D-muramoyl-L-alanine + D-glutamate + ATP = UDP-N-acetyl-alpha-D-muramoyl-L-alanyl-D-glutamate + ADP + phosphate + H(+). Its pathway is cell wall biogenesis; peptidoglycan biosynthesis. Functionally, cell wall formation. Catalyzes the addition of glutamate to the nucleotide precursor UDP-N-acetylmuramoyl-L-alanine (UMA). The protein is UDP-N-acetylmuramoylalanine--D-glutamate ligase of Neisseria gonorrhoeae (strain NCCP11945).